A 264-amino-acid polypeptide reads, in one-letter code: CD320 antigen (264 aa).

The signal sequence occupies residues 1–28 (MARCGAGRAAALGLVLRLLLGLRTGPEA). An LDL-receptor class A 1 domain is found at 50-87 (SCPTDTFKCLTSGYCVPLSWRCDGDRDCSDGSDEEECR). Cystine bridges form between cysteine 51–cysteine 64, cysteine 58–cysteine 77, and cysteine 71–cysteine 86. Ca(2+)-binding residues include tryptophan 69, aspartate 72, aspartate 74, aspartate 76, aspartate 82, and glutamate 83. Asparagine 122 carries an N-linked (GlcNAc...) asparagine glycan. Residues 127–164 (PCQEGELRCILDDVCIPHTWRCDGHPDCPDSSDELSCD) form the LDL-receptor class A 2 domain. 3 disulfides stabilise this stretch: cysteine 128–cysteine 141, cysteine 135–cysteine 154, and cysteine 148–cysteine 163. The Ca(2+) site is built by tryptophan 146, aspartate 149, histidine 151, aspartate 153, aspartate 159, and glutamate 160. Asparagine 195 carries an N-linked (GlcNAc...) asparagine glycan. A helical transmembrane segment spans residues 213–233 (VIAAAGVLSAILVSATILILL).

As to quaternary structure, interacts (via LDL-receptor class A domains) with TCN2.

Its subcellular location is the cell membrane. Receptor for transcobalamin saturated with cobalamin (TCbl). Plays an important role in cobalamin uptake. Plasma membrane protein that is expressed on follicular dendritic cells (FDC) and mediates interaction with germinal center B cells. Functions as a costimulator to promote B cell responses to antigenic stimuli; promotes B cell differentiation and proliferation. Germinal center-B (GC-B) cells differentiate into memory B-cells and plasma cells (PC) through interaction with T-cells and follicular dendritic cells (FDC). CD320 augments the proliferation of PC precursors generated by IL-10. This is CD320 antigen (Cd320) from Rattus norvegicus (Rat).